The sequence spans 368 residues: Epoxyqueuosine reductase QueH (368 aa).

4 residues coordinate [4Fe-4S] cluster: cysteine 6, cysteine 7, cysteine 87, and cysteine 90. Cysteine 174 and cysteine 176 are oxidised to a cystine.

Belongs to the QueH family.

The enzyme catalyses epoxyqueuosine(34) in tRNA + AH2 = queuosine(34) in tRNA + A + H2O. It participates in tRNA modification; tRNA-queuosine biosynthesis. Functionally, catalyzes the conversion of epoxyqueuosine (oQ) to queuosine (Q), which is a hypermodified base found in the wobble positions of tRNA(Asp), tRNA(Asn), tRNA(His) and tRNA(Tyr). The protein is Epoxyqueuosine reductase QueH of Helicobacter pylori (strain ATCC 700392 / 26695) (Campylobacter pylori).